Consider the following 391-residue polypeptide: Putative alpha-ketoglutarate-dependent sulfonate dioxygenase (391 aa).

The Fe cation site is built by His204 and Asp206. Positions 231 and 338 each coordinate 2-oxoglutarate. His353 contacts Fe cation. Residues Arg364 and Arg368 each coordinate 2-oxoglutarate.

Belongs to the TfdA dioxygenase family. Fe(2+) is required as a cofactor.

The protein operates within organosulfur degradation; alkanesulfonate degradation. Acts as an alpha-ketoglutarate-dependent dioxygenase active on sulfonates. The chain is Putative alpha-ketoglutarate-dependent sulfonate dioxygenase from Schizosaccharomyces pombe (strain 972 / ATCC 24843) (Fission yeast).